The following is a 472-amino-acid chain: Sulfate adenylyltransferase subunit 1 (472 aa).

The 218-residue stretch at 22-239 (KELLRFLTCG…TVPIAGDKNY (218 aa)) folds into the tr-type G domain. The tract at residues 31–38 (GSVDDGKS) is G1. Residue 31–38 (GSVDDGKS) participates in GTP binding. Positions 89-93 (GITID) are G2. Residues 110 to 113 (DTPG) are G3. GTP is bound by residues 110 to 114 (DTPGH) and 165 to 168 (NKMD). The tract at residues 165 to 168 (NKMD) is G4. The G5 stretch occupies residues 202 to 204 (SAL).

Belongs to the TRAFAC class translation factor GTPase superfamily. Classic translation factor GTPase family. CysN/NodQ subfamily. In terms of assembly, heterodimer composed of CysD, the smaller subunit, and CysN.

The enzyme catalyses sulfate + ATP + H(+) = adenosine 5'-phosphosulfate + diphosphate. It participates in sulfur metabolism; hydrogen sulfide biosynthesis; sulfite from sulfate: step 1/3. With CysD forms the ATP sulfurylase (ATPS) that catalyzes the adenylation of sulfate producing adenosine 5'-phosphosulfate (APS) and diphosphate, the first enzymatic step in sulfur assimilation pathway. APS synthesis involves the formation of a high-energy phosphoric-sulfuric acid anhydride bond driven by GTP hydrolysis by CysN coupled to ATP hydrolysis by CysD. This Cellvibrio japonicus (strain Ueda107) (Pseudomonas fluorescens subsp. cellulosa) protein is Sulfate adenylyltransferase subunit 1.